A 147-amino-acid chain; its full sequence is Transcription antitermination protein NusB (147 aa).

The protein belongs to the NusB family.

Functionally, involved in transcription antitermination. Required for transcription of ribosomal RNA (rRNA) genes. Binds specifically to the boxA antiterminator sequence of the ribosomal RNA (rrn) operons. The sequence is that of Transcription antitermination protein NusB from Legionella pneumophila (strain Paris).